The sequence spans 502 residues: Putative F-box/FBD/LRR-repeat protein At5g22610 (502 aa).

The region spanning 17-63 (EDLISKLPEVLLSQILSYLPTKDIVRTSVLSKRWKSVWLLIPGLDLD) is the F-box domain. LRR repeat units follow at residues 70 to 98 (YDTFVDFMNEFLFFSREENPCLHKLKLSI), 99 to 127 (QKNENDPSCVTLWTDCVARGKLQHLDVEF), 147 to 180 (CKTLLHLRLYRVLLGNFDQSVDSLPSLKSMCLEE), 181 to 206 (NVYSNEASLESLISSCRVLEDLTIVK), 208 to 228 (DDNVRFLRVHSQSLTSLSVGY), 238 to 263 (YYYDRDRGNSGLVIDAPRLKYLTFNN), and 344 to 373 (SVWLSSFDFLDILPKLLESCPNLKSIVLET). Residues 384–435 (VERRVSSVPECLLSSLEFVEIKNRISVDDGALEVARYFVENSVNLQKVVLRL) enclose the FBD domain.

This chain is Putative F-box/FBD/LRR-repeat protein At5g22610, found in Arabidopsis thaliana (Mouse-ear cress).